We begin with the raw amino-acid sequence, 238 residues long: Orotidine 5'-phosphate decarboxylase (238 aa).

Substrate is bound by residues Asp10, Lys32, 59 to 68 (DLKLHDIPNT), Thr122, Arg184, Gln193, Gly213, and Arg214. Lys61 (proton donor) is an active-site residue.

Belongs to the OMP decarboxylase family. Type 1 subfamily. As to quaternary structure, homodimer.

It catalyses the reaction orotidine 5'-phosphate + H(+) = UMP + CO2. Its pathway is pyrimidine metabolism; UMP biosynthesis via de novo pathway; UMP from orotate: step 2/2. Its function is as follows. Catalyzes the decarboxylation of orotidine 5'-monophosphate (OMP) to uridine 5'-monophosphate (UMP). This Bacillus cereus (strain ZK / E33L) protein is Orotidine 5'-phosphate decarboxylase.